A 96-amino-acid polypeptide reads, in one-letter code: MKFLSALLLIVLLISVVFGNTSGPSSAWATTTTGGTTGSQTSPATHGGHGGNGGNGHSNIDIHADVGLLDTLSVHARVKANVADTVNVKAKARVEA.

The first 19 residues, Met1 to Gly19, serve as a signal peptide directing secretion. N-linked (GlcNAc...) asparagine glycosylation is present at Asn20. Residues Ala27 to His46 show a composition bias toward low complexity. Positions Ala27–Ser58 are disordered. Residues Gly47–Gly56 show a composition bias toward gly residues.

The protein resides in the secreted. This is an uncharacterized protein from Dictyostelium discoideum (Social amoeba).